Consider the following 377-residue polypeptide: tRNA-specific 2-thiouridylase MnmA (377 aa).

Residues 22 to 29 (GMSGGVDS) and methionine 48 each bind ATP. An interaction with target base in tRNA region spans residues 108–110 (NPD). The active-site Nucleophile is cysteine 113. Residues cysteine 113 and cysteine 210 are joined by a disulfide bond. Glycine 138 contributes to the ATP binding site. Residues 160 to 162 (KDQ) form an interaction with tRNA region. Cysteine 210 acts as the Cysteine persulfide intermediate in catalysis. Positions 322–323 (RY) are interaction with tRNA.

The protein belongs to the MnmA/TRMU family.

It localises to the cytoplasm. It catalyses the reaction S-sulfanyl-L-cysteinyl-[protein] + uridine(34) in tRNA + AH2 + ATP = 2-thiouridine(34) in tRNA + L-cysteinyl-[protein] + A + AMP + diphosphate + H(+). Its function is as follows. Catalyzes the 2-thiolation of uridine at the wobble position (U34) of tRNA, leading to the formation of s(2)U34. The chain is tRNA-specific 2-thiouridylase MnmA from Shewanella amazonensis (strain ATCC BAA-1098 / SB2B).